The chain runs to 212 residues: ATP-dependent dethiobiotin synthetase BioD (212 aa).

13 to 18 (GIGKTV) contributes to the ATP binding site. T17 contributes to the Mg(2+) binding site. K33 is an active-site residue. S37 provides a ligand contact to substrate. Residue E100 participates in Mg(2+) binding. Residues 100–103 (EGAG) and 184–186 (PRL) contribute to the ATP site.

Belongs to the dethiobiotin synthetase family. As to quaternary structure, homodimer. The cofactor is Mg(2+).

The protein localises to the cytoplasm. The enzyme catalyses (7R,8S)-7,8-diammoniononanoate + CO2 + ATP = (4R,5S)-dethiobiotin + ADP + phosphate + 3 H(+). It participates in cofactor biosynthesis; biotin biosynthesis; biotin from 7,8-diaminononanoate: step 1/2. In terms of biological role, catalyzes a mechanistically unusual reaction, the ATP-dependent insertion of CO2 between the N7 and N8 nitrogen atoms of 7,8-diaminopelargonic acid (DAPA, also called 7,8-diammoniononanoate) to form a ureido ring. This chain is ATP-dependent dethiobiotin synthetase BioD, found in Brucella anthropi (strain ATCC 49188 / DSM 6882 / CCUG 24695 / JCM 21032 / LMG 3331 / NBRC 15819 / NCTC 12168 / Alc 37) (Ochrobactrum anthropi).